A 408-amino-acid polypeptide reads, in one-letter code: Exo-alpha-sialidase ARB_03431 (408 aa).

A signal peptide spans 1–22 (MGIKQWLLSLVVVAISATATQA). Positions 62, 81, 87, and 150 each coordinate substrate. N-linked (GlcNAc...) asparagine glycosylation occurs at asparagine 237. Substrate is bound by residues arginine 267, arginine 324, 324 to 325 (RT), 333 to 334 (YD), lysine 339, tyrosine 360, aspartate 378, and 378 to 380 (DWY). Asparagine 398 carries an N-linked (GlcNAc...) asparagine glycan.

It belongs to the glycosyl hydrolase 33 family.

The protein localises to the secreted. The catalysed reaction is Hydrolysis of alpha-(2-&gt;3)-, alpha-(2-&gt;6)-, alpha-(2-&gt;8)- glycosidic linkages of terminal sialic acid residues in oligosaccharides, glycoproteins, glycolipids, colominic acid and synthetic substrates.. In terms of biological role, sialidase is able to release sialic acid from a wide variety of natural substrates. The sequence is that of Exo-alpha-sialidase ARB_03431 from Arthroderma benhamiae (strain ATCC MYA-4681 / CBS 112371) (Trichophyton mentagrophytes).